We begin with the raw amino-acid sequence, 260 residues long: Thiazole synthase (260 aa).

Lys-96 (schiff-base intermediate with DXP) is an active-site residue. Residues Gly-157, 184–185 (AG), and 206–207 (NT) contribute to the 1-deoxy-D-xylulose 5-phosphate site.

This sequence belongs to the ThiG family. In terms of assembly, homotetramer. Forms heterodimers with either ThiH or ThiS.

The protein resides in the cytoplasm. The enzyme catalyses [ThiS sulfur-carrier protein]-C-terminal-Gly-aminoethanethioate + 2-iminoacetate + 1-deoxy-D-xylulose 5-phosphate = [ThiS sulfur-carrier protein]-C-terminal Gly-Gly + 2-[(2R,5Z)-2-carboxy-4-methylthiazol-5(2H)-ylidene]ethyl phosphate + 2 H2O + H(+). Its pathway is cofactor biosynthesis; thiamine diphosphate biosynthesis. Functionally, catalyzes the rearrangement of 1-deoxy-D-xylulose 5-phosphate (DXP) to produce the thiazole phosphate moiety of thiamine. Sulfur is provided by the thiocarboxylate moiety of the carrier protein ThiS. In vitro, sulfur can be provided by H(2)S. The sequence is that of Thiazole synthase from Nitrobacter winogradskyi (strain ATCC 25391 / DSM 10237 / CIP 104748 / NCIMB 11846 / Nb-255).